The following is a 319-amino-acid chain: CBBY-like protein (319 aa).

A chloroplast-targeting transit peptide spans 1-65 (MATVKISLSL…YRSSRSVGVT (65 aa)). D82 acts as the Nucleophile in catalysis. D82 and D84 together coordinate Mg(2+). D82 contributes to the substrate binding site. D84 functions as the Proton donor in the catalytic mechanism. Residues E91, 125–129 (GGKER), 158–161 (HKQK), and 198–204 (STSNEKA) each bind substrate. D258 is a Mg(2+) binding site.

This sequence belongs to the HAD-like hydrolase superfamily. DOG/GPP family. Mg(2+) serves as cofactor.

The protein resides in the plastid. Its subcellular location is the chloroplast. The enzyme catalyses D-xylulose 1,5-bisphosphate + H2O = D-xylulose 5-phosphate + phosphate. Its function is as follows. Highly selective xylulose-1,5-bisphosphate (XuBP) phosphatase. Also shows activity towards ribulose-1,5-bisphosphate (RuBP) and fructose-1,6-bisphosphate (FBP), but not towards fructose-6-phosphate (F6P) or ribulose-5-phosphate (Ru5P). Degrades xylulose-1,5-bisphosphate, a potent inhibitor of rubisco produced by the rubisco itself. This Arabidopsis thaliana (Mouse-ear cress) protein is CBBY-like protein.